Consider the following 363-residue polypeptide: S-adenosylmethionine:tRNA ribosyltransferase-isomerase (363 aa).

Belongs to the QueA family. Monomer.

The protein localises to the cytoplasm. The catalysed reaction is 7-aminomethyl-7-carbaguanosine(34) in tRNA + S-adenosyl-L-methionine = epoxyqueuosine(34) in tRNA + adenine + L-methionine + 2 H(+). The protein operates within tRNA modification; tRNA-queuosine biosynthesis. Functionally, transfers and isomerizes the ribose moiety from AdoMet to the 7-aminomethyl group of 7-deazaguanine (preQ1-tRNA) to give epoxyqueuosine (oQ-tRNA). This Pasteurella multocida (strain Pm70) protein is S-adenosylmethionine:tRNA ribosyltransferase-isomerase.